The following is a 512-amino-acid chain: Lysine--tRNA ligase (512 aa).

Mg(2+) contacts are provided by Glu-408 and Glu-415.

Belongs to the class-II aminoacyl-tRNA synthetase family. In terms of assembly, homodimer. Requires Mg(2+) as cofactor.

It is found in the cytoplasm. It catalyses the reaction tRNA(Lys) + L-lysine + ATP = L-lysyl-tRNA(Lys) + AMP + diphosphate. The chain is Lysine--tRNA ligase from Prochlorococcus marinus (strain MIT 9215).